The primary structure comprises 313 residues: Ribosomal RNA small subunit methyltransferase H (313 aa).

Residues 35–37 (GGH), Asp-55, Phe-79, Asp-101, and Gln-108 each bind S-adenosyl-L-methionine.

Belongs to the methyltransferase superfamily. RsmH family.

It is found in the cytoplasm. It catalyses the reaction cytidine(1402) in 16S rRNA + S-adenosyl-L-methionine = N(4)-methylcytidine(1402) in 16S rRNA + S-adenosyl-L-homocysteine + H(+). Functionally, specifically methylates the N4 position of cytidine in position 1402 (C1402) of 16S rRNA. The protein is Ribosomal RNA small subunit methyltransferase H of Enterobacter sp. (strain 638).